A 479-amino-acid polypeptide reads, in one-letter code: Fibrinogen beta chain (479 aa).

The signal sequence occupies residues 1-18 (MRHLWLLLLSVSLVQTQA). The interval 20 to 82 (TTDSDKVDLS…VERKPPDAGG (63 aa)) is disordered. The tract at residues 33-35 (GHR) is beta-chain polymerization, binding distal domain of another fibrin. Basic and acidic residues-rich tracts occupy residues 35–45 (RPVDRRKEEPP) and 64–78 (AKVDAGQKKVERKPP). Intrachain disulfides connect Cys-219–Cys-304 and Cys-229–Cys-258. In terms of domain architecture, Fibrinogen C-terminal spans 220 to 476 (NIPVVSGKEC…RMSMKIRPVF (257 aa)). Asn-382 carries an N-linked (GlcNAc...) asparagine glycan. A disulfide bridge links Cys-412 with Cys-425.

Heterohexamer; disulfide linked. Contains 2 sets of 3 non-identical chains (alpha, beta and gamma). The 2 heterotrimers are in head to head conformation with the N-termini in a small central domain. Conversion of fibrinogen to fibrin is triggered by thrombin, which cleaves fibrinopeptides A and B from alpha and beta chains, and thus exposes the N-terminal polymerization sites responsible for the formation of the soft clot.

It is found in the secreted. Its function is as follows. Cleaved by the protease thrombin to yield monomers which, together with fibrinogen alpha (FGA) and fibrinogen gamma (FGG), polymerize to form an insoluble fibrin matrix. Fibrin has a major function in hemostasis as one of the primary components of blood clots. In addition, functions during the early stages of wound repair to stabilize the lesion and guide cell migration during re-epithelialization. Was originally thought to be essential for platelet aggregation, based on in vitro studies using anticoagulated blood. However subsequent studies have shown that it is not absolutely required for thrombus formation in vivo. Enhances expression of SELP in activated platelets. Maternal fibrinogen is essential for successful pregnancy. Fibrin deposition is also associated with infection, where it protects against IFNG-mediated hemorrhage. May also facilitate the antibacterial immune response via both innate and T-cell mediated pathways. This chain is Fibrinogen beta chain (Fgb), found in Rattus norvegicus (Rat).